The following is a 336-amino-acid chain: Dihydroorotate dehydrogenase (quinone) (336 aa).

Residues Ala-62–Lys-66 and Thr-86 contribute to the FMN site. Residue Lys-66 coordinates substrate. Asn-111–Phe-115 serves as a coordination point for substrate. Residues Asn-139 and Asn-172 each contribute to the FMN site. Asn-172 is a substrate binding site. Ser-175 acts as the Nucleophile in catalysis. Asn-177 serves as a coordination point for substrate. Residues Lys-217 and Thr-245 each coordinate FMN. Asn-246–Thr-247 is a substrate binding site. Residues Gly-268, Gly-297, and Tyr-318–Ser-319 each bind FMN.

This sequence belongs to the dihydroorotate dehydrogenase family. Type 2 subfamily. In terms of assembly, monomer. Requires FMN as cofactor.

The protein resides in the cell membrane. It carries out the reaction (S)-dihydroorotate + a quinone = orotate + a quinol. It participates in pyrimidine metabolism; UMP biosynthesis via de novo pathway; orotate from (S)-dihydroorotate (quinone route): step 1/1. Its function is as follows. Catalyzes the conversion of dihydroorotate to orotate with quinone as electron acceptor. This is Dihydroorotate dehydrogenase (quinone) from Aliivibrio salmonicida (strain LFI1238) (Vibrio salmonicida (strain LFI1238)).